Here is a 413-residue protein sequence, read N- to C-terminus: Alpha-1-antitrypsin-like protein GS55-LT (413 aa).

Positions 1–21 (MPSSISWGLLLLAGLSCLATG) are cleaved as a signal peptide. N-linked (GlcNAc...) asparagine glycans are attached at residues asparagine 65, asparagine 102, and asparagine 123. Positions 368–387 (RHTVKGPMALTLAPEVKFNR) are RCL.

Belongs to the serpin family.

The protein resides in the secreted. Inhibitor of serine proteases. This Ictidomys tridecemlineatus (Thirteen-lined ground squirrel) protein is Alpha-1-antitrypsin-like protein GS55-LT.